The sequence spans 613 residues: Ribosome-associated molecular chaperone SSB1 (613 aa).

Ala2 carries the post-translational modification N-acetylalanine. A nucleotide binding domain (NBD) region spans residues 2–391 (AEGVFQGAIG…ILTGQSTSDE (390 aa)). An ATP-binding site is contributed by 16-18 (TTY). Thr47 bears the Phosphothreonine mark. ATP-binding positions include Lys73, 205–207 (GGT), 271–278 (ERAKRTLS), and Gly342. Residues 392–402 (TKDLLLLDVAP) form an inter-domain linker region. Positions 403-613 (LSLGVGMQGD…RVVTKAMSSR (211 aa)) are substrate binding domain (SBD). Residues 428-430 (KRR) carry the Contributes to ribosome binding motif. Thr431 is subject to Phosphothreonine. The interval 516–612 (SEEIEKMVNQ…KRVVTKAMSS (97 aa)) is lid domain (SBDalpha). Positions 574–582 (IEAALSDAL) match the Nuclear export signal motif. The tract at residues 601–613 (GLKRVVTKAMSSR) is required for interaction with ribosomes.

Belongs to the heat shock protein 70 family. Ssb-type Hsp70 subfamily. Binds to ribosomes. Binds close to the ribosomal tunnel exit via contacts with both ribosomal proteins RPL35, RPL39 and RPL19, and rRNA. Directly interacts with nascent polypeptides. This interaction is dependent on the ribosome-associated complex (RAC). Interacts with SSE1. Interacts with FES1. Interacts with NAP1.

The protein resides in the cytoplasm. It catalyses the reaction ATP + H2O = ADP + phosphate + H(+). Ribosome-bound, Hsp70-type chaperone that assists in the cotranslational folding of newly synthesized proteins in the cytosol. Stimulates folding by interacting with nascent chains, binding to short, largely hydrophobic sequences exposed by unfolded proteins, thereby stabilizing longer, more slowly translated, and aggregation-prone nascent polypeptides and domains that cannot fold stably until fully synthesized. The Hsp70-protein substrate interaction depends on ATP-binding and on allosteric regulation between the NBD and the SBD. The ATP-bound state is characterized by a fast exchange rate of substrate (low affinity state), while in the ADP-bound state exchange is much slower (high affinity state). During the Hsp70 cycle, the chaperone switches between the ATP-bound state (open conformation) and the ADP-bound state (closed conformation) by major conformational rearrangements involving mainly the lid domain. Ssb cooperates with a specific Hsp40/Hsp70 co-chaperone termed the ribosome-associated complex (RAC), which stimulates the ATPase activity of the ribosome-associated pool of Ssbs and switches it to the high affinity substrate binding state. Hsp110 chaperone SSE1 and FES1 act as nucleotide exchange factors that cause substrate release. The chain is Ribosome-associated molecular chaperone SSB1 from Saccharomyces cerevisiae (strain ATCC 204508 / S288c) (Baker's yeast).